Here is a 429-residue protein sequence, read N- to C-terminus: Serine hydroxymethyltransferase (429 aa).

(6S)-5,6,7,8-tetrahydrofolate-binding positions include Leu128 and 132–134 (GHL). At Lys237 the chain carries N6-(pyridoxal phosphate)lysine.

It belongs to the SHMT family. Homodimer. Pyridoxal 5'-phosphate is required as a cofactor.

The protein localises to the cytoplasm. The enzyme catalyses (6R)-5,10-methylene-5,6,7,8-tetrahydrofolate + glycine + H2O = (6S)-5,6,7,8-tetrahydrofolate + L-serine. It functions in the pathway one-carbon metabolism; tetrahydrofolate interconversion. Its pathway is amino-acid biosynthesis; glycine biosynthesis; glycine from L-serine: step 1/1. Catalyzes the reversible interconversion of serine and glycine with tetrahydrofolate (THF) serving as the one-carbon carrier. This reaction serves as the major source of one-carbon groups required for the biosynthesis of purines, thymidylate, methionine, and other important biomolecules. Also exhibits THF-independent aldolase activity toward beta-hydroxyamino acids, producing glycine and aldehydes, via a retro-aldol mechanism. This chain is Serine hydroxymethyltransferase, found in Caulobacter vibrioides (strain ATCC 19089 / CIP 103742 / CB 15) (Caulobacter crescentus).